A 203-amino-acid polypeptide reads, in one-letter code: NAD(P)H dehydrogenase (quinone) (203 aa).

The region spanning 3–194 (IMVVYYSAYG…AGANFQGRHV (192 aa)) is the Flavodoxin-like domain. FMN contacts are provided by residues 9-14 (SAYGHV) and 82-84 (ARF). Residue Y11 coordinates NAD(+). Position 102 (W102) interacts with substrate. Residues 117 to 123 (STGTQHG) and H138 contribute to the FMN site.

It belongs to the WrbA family. It depends on FMN as a cofactor.

The catalysed reaction is a quinone + NADH + H(+) = a quinol + NAD(+). The enzyme catalyses a quinone + NADPH + H(+) = a quinol + NADP(+). This Syntrophus aciditrophicus (strain SB) protein is NAD(P)H dehydrogenase (quinone).